A 268-amino-acid polypeptide reads, in one-letter code: L-gamma-glutamyl-L-propargylglycine hydroxylase (268 aa).

The cofactor is Fe(2+).

The catalysed reaction is L-gamma-glutamyl-L-propargylglycine + 2-oxoglutarate + O2 = L-gamma-glutamyl-(3R)-L-beta-ethynylserine + succinate + CO2. The protein operates within amino-acid metabolism. It participates in antibiotic biosynthesis. In terms of biological role, involved in the biosynthesis of terminal alkyne-containing amino acids such as L-beta-ethynylserine, that are produced as antibiotics by S.cattleya. Catalyzes the hydroxylation of the dipeptide L-gamma-glutamyl-L-propargylglycine, leading to L-gamma-glutamyl-L-beta-ethynylserine. Cannot use L-propargylglycine as substrate. This is L-gamma-glutamyl-L-propargylglycine hydroxylase from Streptantibioticus cattleyicolor (strain ATCC 35852 / DSM 46488 / JCM 4925 / NBRC 14057 / NRRL 8057) (Streptomyces cattleya).